The sequence spans 178 residues: Photosystem I assembly protein Ycf4 (178 aa).

Transmembrane regions (helical) follow at residues 19 to 39 (ILVA…SLSS) and 61 to 81 (LVMG…WAVI).

This sequence belongs to the Ycf4 family.

It localises to the cellular thylakoid membrane. In terms of biological role, seems to be required for the assembly of the photosystem I complex. In Synechococcus sp. (strain WH7803), this protein is Photosystem I assembly protein Ycf4.